Here is a 299-residue protein sequence, read N- to C-terminus: Probable lipid kinase YegS (299 aa).

The 132-residue stretch at Ala2 to Thr133 folds into the DAGKc domain. ATP-binding positions include Thr40, Gly66–Glu72, and Thr95. Residues Leu215, Asp218, and Leu220 each contribute to the Mg(2+) site. The active-site Proton acceptor is Glu271.

This sequence belongs to the diacylglycerol/lipid kinase family. YegS lipid kinase subfamily. Mg(2+) is required as a cofactor. It depends on Ca(2+) as a cofactor.

The protein localises to the cytoplasm. Its function is as follows. Probably phosphorylates lipids; the in vivo substrate is unknown. In Shigella boydii serotype 18 (strain CDC 3083-94 / BS512), this protein is Probable lipid kinase YegS.